The chain runs to 150 residues: Putative biopolymer transport protein ExbB-like 2 (150 aa).

The next 3 membrane-spanning stretches (helical) occupy residues 5-25 (VDYG…AIAI), 63-83 (APYI…MDLG), and 97-117 (LALA…AIVI).

The protein belongs to the ExbB/TolQ family.

It is found in the cell inner membrane. This is Putative biopolymer transport protein ExbB-like 2 from Helicobacter pylori (strain J99 / ATCC 700824) (Campylobacter pylori J99).